Here is a 115-residue protein sequence, read N- to C-terminus: Large ribosomal subunit protein uL22 (115 aa).

This sequence belongs to the universal ribosomal protein uL22 family. In terms of assembly, part of the 50S ribosomal subunit.

This protein binds specifically to 23S rRNA; its binding is stimulated by other ribosomal proteins, e.g. L4, L17, and L20. It is important during the early stages of 50S assembly. It makes multiple contacts with different domains of the 23S rRNA in the assembled 50S subunit and ribosome. Its function is as follows. The globular domain of the protein is located near the polypeptide exit tunnel on the outside of the subunit, while an extended beta-hairpin is found that lines the wall of the exit tunnel in the center of the 70S ribosome. The polypeptide is Large ribosomal subunit protein uL22 (Coxiella burnetii (strain CbuK_Q154) (Coxiella burnetii (strain Q154))).